The primary structure comprises 207 residues: Vascular endothelial growth factor B (207 aa).

Positions 1 to 21 (MSPLLRRLLLAALLQLAPAQA) are cleaved as a signal peptide. 3 disulfides stabilise this stretch: cysteine 47-cysteine 89, cysteine 78-cysteine 122, and cysteine 82-cysteine 124. A compositionally biased stretch (basic and acidic residues) spans 122–139 (CECRPKKKDSAVKPDRAA). The interval 122–207 (CECRPKKKDS…AASSVAKGGA (86 aa)) is disordered. The span at 174–207 (PSAHAAPSTTSALTPGPAAAAADAAASSVAKGGA) shows a compositional bias: low complexity.

This sequence belongs to the PDGF/VEGF growth factor family. Homodimer; disulfide-linked. Can also form heterodimer with VEGF. In terms of processing, VEGF-B186 is O-glycosylated. As to expression, expressed in all tissues except liver. Highest levels found in heart, skeletal muscle and pancreas.

Its subcellular location is the secreted. Growth factor for endothelial cells. VEGF-B167 binds heparin and neuropilin-1 whereas the binding to neuropilin-1 of VEGF-B186 is regulated by proteolysis. This Homo sapiens (Human) protein is Vascular endothelial growth factor B (VEGFB).